Consider the following 48-residue polypeptide: Large ribosomal subunit protein bL32 (48 aa).

Positions 1–20 are enriched in basic residues; the sequence is MAVPKRRVSKTRAAKRRTHY. Positions 1–48 are disordered; that stretch reads MAVPKRRVSKTRAAKRRTHYKVSLPMPVKDKDGSYKMPHRANPTTKEY.

Belongs to the bacterial ribosomal protein bL32 family.

This chain is Large ribosomal subunit protein bL32, found in Campylobacter jejuni subsp. doylei (strain ATCC BAA-1458 / RM4099 / 269.97).